The following is a 632-amino-acid chain: Extracellular metalloproteinase 2 (632 aa).

The first 19 residues, 1–19 (MHGLLLAGLAAALPLGVAG), serve as a signal peptide directing secretion. Positions 20–244 (LPARQQSGLS…VHNVVDYVAS (225 aa)) are excised as a propeptide. A glycan (N-linked (GlcNAc...) asparagine) is linked at N270. H429 is a Zn(2+) binding site. The active site involves E430. Residue H433 participates in Zn(2+) binding.

This sequence belongs to the peptidase M36 family. The cofactor is Zn(2+).

It is found in the secreted. Secreted metalloproteinase that allows assimilation of proteinaceous substrates and probably acts as a virulence factor. The protein is Extracellular metalloproteinase 2 (MEP2) of Arthroderma gypseum (strain ATCC MYA-4604 / CBS 118893) (Microsporum gypseum).